We begin with the raw amino-acid sequence, 931 residues long: MAAPPARPDHTRLLHICLLLGVLVEIRAEQIRYSVFEEQEEGSVVGNIAKDLGLAPRELAERGVRIVSRGRTQLFALNPRSGTLVTAGRIDREELCDRSPNCVTNLEILLEDTVKILRVEVEIIDVNDNPPSFGTEQREIKVAENENPGTRFPLPEAFDPDVGVNSLQGYQLNSNGYFSLDVQSGADGIKYPELVLERALDREEEAVHHLVLTAFDGGDPVRSGTARILIILVDTNDNAPVFTQPEYHVSVHENVPVGTLLLTVKATDPDEGANGDVTYSFRKVRDKISQLFQLNSLSGDITILGDLDYEDSGFYDIDVEAHDGPGLRARSKVLVTVLDENDNAPEVTVTSLTSSVQETSSPGTVIALFNVHDSDSGGNGLVTCSIPDNLPFTLEKTYGNYYRLLTHRTLDREEVSEYNITVTATDQGTPPLSTETHISLQVMDINDNPPTFPHASYSAYVPENNPRGASILSMTAQDPDSGDNARITYSLAEDTFQGAPLSSYVSINSNTGILYALRSFDYEQFRDLQLLVTASDSGDPPLSSNVSLSLFVLDQNDNVPEILYPTFPTDDSTGVELAPRSADSGYLVTKVVAVDRDSGQNAWLSYRLLKSSEPGLFAVGLHTGEVRTARALLDRDALKQSLVVVVQDHGQPPLSATVTLTVAVADSIPDVLADLGSLKPSADPDDSGLTLYLVVSVAAVSCVFLAFVTVLLALKLRRWHKSRLLHAEGSRLSGVPASHFVGVDGVRAFLQTYSHEVSLTADSRKSHLIFSQPSYADTLISLESCEKSEPLLITQDLLETKGDPNLQQAPPNTDWRFSQAQRPGTSGSQNGDDTGTWPNNQFDTEMLQAMILASASEAADGSSTLGGGAGTMGLSARYGPQFTLQHVPDYRQNVYIPGSNATLTNAAGKRDGKAPAGGNGNKKKSGKKEKK.

Residues 1–28 (MAAPPARPDHTRLLHICLLLGVLVEIRA) form the signal peptide. Cadherin domains are found at residues 29–133 (EQIR…PPSF), 134–242 (GTEQ…APVF), 243–347 (TQPE…APEV), 348–452 (TVTS…PPTF), 453–567 (PHAS…YPTF), and 570–682 (DDST…KPSA). Topologically, residues 29-692 (EQIRYSVFEE…DPDDSGLTLY (664 aa)) are extracellular. Asparagine 419 and asparagine 545 each carry an N-linked (GlcNAc...) asparagine glycan. A helical membrane pass occupies residues 693 to 713 (LVVSVAAVSCVFLAFVTVLLA). The Cytoplasmic portion of the chain corresponds to 714 to 931 (LKLRRWHKSR…KKKSGKKEKK (218 aa)). 2 disordered regions span residues 801 to 840 (KGDPNLQQAPPNTDWRFSQAQRPGTSGSQNGDDTGTWPNN) and 901 to 931 (ATLTNAAGKRDGKAPAGGNGNKKKSGKKEKK). The span at 805-840 (NLQQAPPNTDWRFSQAQRPGTSGSQNGDDTGTWPNN) shows a compositional bias: polar residues. A compositionally biased stretch (basic residues) spans 921 to 931 (NKKKSGKKEKK).

The protein localises to the cell membrane. Its function is as follows. Potential calcium-dependent cell-adhesion protein. May be involved in the establishment and maintenance of specific neuronal connections in the brain. This is Protocadherin gamma-A4 (PCDHGA4) from Pan troglodytes (Chimpanzee).